The following is a 347-amino-acid chain: Glucose 1-dehydrogenase (347 aa).

Cysteine 39 lines the Zn(2+) pocket. Threonine 41 is a substrate binding site. Zn(2+) contacts are provided by histidine 64 and glutamate 65. Substrate-binding residues include glutamate 110 and glutamate 146. Glutamate 146 is a Zn(2+) binding site. NADP(+) contacts are provided by residues 178–181, 260–262, and 289–291; these read AGPV, LGV, and SVN. Residue asparagine 291 participates in substrate binding.

The protein belongs to the zinc-containing alcohol dehydrogenase family. Glucose 1-dehydrogenase subfamily. In terms of assembly, homodimer. Zn(2+) is required as a cofactor.

It catalyses the reaction D-glucose + NAD(+) = D-glucono-1,5-lactone + NADH + H(+). The catalysed reaction is D-glucose + NADP(+) = D-glucono-1,5-lactone + NADPH + H(+). Functionally, catalyzes the NAD(P)(+)-dependent oxidation of D-glucose to D-gluconate via gluconolactone. To a lesser extent, is also active with xylose as substrate, but mannose, arabinose, galactose, fructose 6-phosphate, glucose 6-phosphate, glycerinaldehyde 3-phosphate, ribose, sorbitol, ethanol, erythritol, or lactose are not oxidized by the enzyme. Can utilize both NAD(+) and NADP(+) as electron acceptor, with a marked preference for NADP(+). Is involved in the degradation of glucose through a non-phosphorylative variant of the Entner-Doudoroff pathway. In Thermoproteus tenax (strain ATCC 35583 / DSM 2078 / JCM 9277 / NBRC 100435 / Kra 1), this protein is Glucose 1-dehydrogenase (gdh).